The primary structure comprises 449 residues: Glutamate--tRNA ligase (449 aa).

The short motif at 10–20 (PSPTGFLHIGN) is the 'HIGH' region element. A 'KMSKS' region motif is present at residues 214 to 218 (KLSKR). K217 serves as a coordination point for ATP.

It belongs to the class-I aminoacyl-tRNA synthetase family. Glutamate--tRNA ligase type 1 subfamily. In terms of assembly, monomer.

It is found in the cytoplasm. The catalysed reaction is tRNA(Glu) + L-glutamate + ATP = L-glutamyl-tRNA(Glu) + AMP + diphosphate. Functionally, catalyzes the attachment of glutamate to tRNA(Glu) in a two-step reaction: glutamate is first activated by ATP to form Glu-AMP and then transferred to the acceptor end of tRNA(Glu). The protein is Glutamate--tRNA ligase of Onion yellows phytoplasma (strain OY-M).